A 174-amino-acid chain; its full sequence is MQQYIAGRYAQSLYAVCGPRLESDANKFLGLLSENNFLSFAKVKTSTKLHVLDRLHLPCELKNLCKLLLANHRGFLCTTVLLGYIEIVKKNRKEADARVESYSRLSATAKKEVADALLIKFPYLKKINIAQKVNRSILGGLTIKINSIMIDLSIAGRLAKCKSIGQSTILEIFQ.

Belongs to the ATPase delta chain family. In terms of assembly, F-type ATPases have 2 components, F(1) - the catalytic core - and F(0) - the membrane proton channel. F(1) has five subunits: alpha(3), beta(3), gamma(1), delta(1), epsilon(1). F(0) has three main subunits: a(1), b(2) and c(10-14). The alpha and beta chains form an alternating ring which encloses part of the gamma chain. F(1) is attached to F(0) by a central stalk formed by the gamma and epsilon chains, while a peripheral stalk is formed by the delta and b chains.

It is found in the cell inner membrane. Functionally, f(1)F(0) ATP synthase produces ATP from ADP in the presence of a proton or sodium gradient. F-type ATPases consist of two structural domains, F(1) containing the extramembraneous catalytic core and F(0) containing the membrane proton channel, linked together by a central stalk and a peripheral stalk. During catalysis, ATP synthesis in the catalytic domain of F(1) is coupled via a rotary mechanism of the central stalk subunits to proton translocation. This protein is part of the stalk that links CF(0) to CF(1). It either transmits conformational changes from CF(0) to CF(1) or is implicated in proton conduction. The chain is ATP synthase subunit delta from Neorickettsia sennetsu (strain ATCC VR-367 / Miyayama) (Ehrlichia sennetsu).